We begin with the raw amino-acid sequence, 274 residues long: Undecaprenyl-diphosphatase (274 aa).

7 consecutive transmembrane segments (helical) span residues P40 to F60, W90 to I110, F114 to A134, I147 to V167, Y190 to I210, P221 to L241, and F252 to I272.

It belongs to the UppP family.

The protein resides in the cell membrane. The catalysed reaction is di-trans,octa-cis-undecaprenyl diphosphate + H2O = di-trans,octa-cis-undecaprenyl phosphate + phosphate + H(+). Functionally, catalyzes the dephosphorylation of undecaprenyl diphosphate (UPP). Confers resistance to bacitracin. The sequence is that of Undecaprenyl-diphosphatase from Nocardioides sp. (strain ATCC BAA-499 / JS614).